The primary structure comprises 147 residues: Large ribosomal subunit protein bL9 (147 aa).

This sequence belongs to the bacterial ribosomal protein bL9 family.

Binds to the 23S rRNA. This Halothermothrix orenii (strain H 168 / OCM 544 / DSM 9562) protein is Large ribosomal subunit protein bL9.